The sequence spans 37 residues: uncharacterized protein (37 aa).

A helical membrane pass occupies residues 16–36; it reads FALIVVLFILLIIVGTAFVGG.

This sequence belongs to the SscA family.

The protein resides in the membrane. This is an uncharacterized protein from Bacillus subtilis (strain 168).